A 210-amino-acid chain; its full sequence is Small ribosomal subunit protein uS5 (210 aa).

Residues 1-11 show a composition bias toward polar residues; that stretch reads MTQPNTQTTPN. The tract at residues 1-56 is disordered; it reads MTQPNTQTTPNDVPAAAEGQHQEQQQQQRRGGGRERRGGGRRGDRRGQERDSEWQE. Low complexity predominate over residues 18–29; the sequence is EGQHQEQQQQQR. Positions 32-56 are enriched in basic and acidic residues; it reads GGRERRGGGRRGDRRGQERDSEWQE. Residues 54 to 117 enclose the S5 DRBM domain; that stretch reads WQERVVQIRR…ADGKKHLVKV (64 aa).

This sequence belongs to the universal ribosomal protein uS5 family. As to quaternary structure, part of the 30S ribosomal subunit. Contacts proteins S4 and S8.

Its function is as follows. With S4 and S12 plays an important role in translational accuracy. Located at the back of the 30S subunit body where it stabilizes the conformation of the head with respect to the body. The protein is Small ribosomal subunit protein uS5 of Prochlorococcus marinus (strain MIT 9303).